The following is a 359-amino-acid chain: Heat-inducible transcription repressor HrcA (359 aa).

The protein belongs to the HrcA family.

Negative regulator of class I heat shock genes (grpE-dnaK-dnaJ and groELS operons). Prevents heat-shock induction of these operons. The polypeptide is Heat-inducible transcription repressor HrcA (Roseiflexus castenholzii (strain DSM 13941 / HLO8)).